Here is an 80-residue protein sequence, read N- to C-terminus: Exodeoxyribonuclease 7 small subunit (80 aa).

It belongs to the XseB family. In terms of assembly, heterooligomer composed of large and small subunits.

The protein localises to the cytoplasm. The catalysed reaction is Exonucleolytic cleavage in either 5'- to 3'- or 3'- to 5'-direction to yield nucleoside 5'-phosphates.. Bidirectionally degrades single-stranded DNA into large acid-insoluble oligonucleotides, which are then degraded further into small acid-soluble oligonucleotides. The sequence is that of Exodeoxyribonuclease 7 small subunit from Pseudomonas paraeruginosa (strain DSM 24068 / PA7) (Pseudomonas aeruginosa (strain PA7)).